The following is a 321-amino-acid chain: Ferredoxin--NADP reductase (321 aa).

Glu-33, Gln-41, Tyr-46, Val-86, Leu-119, Asp-277, and Ser-318 together coordinate FAD.

This sequence belongs to the ferredoxin--NADP reductase type 2 family. As to quaternary structure, homodimer. FAD is required as a cofactor.

The catalysed reaction is 2 reduced [2Fe-2S]-[ferredoxin] + NADP(+) + H(+) = 2 oxidized [2Fe-2S]-[ferredoxin] + NADPH. The sequence is that of Ferredoxin--NADP reductase from Lactococcus lactis subsp. cremoris (strain SK11).